A 308-amino-acid polypeptide reads, in one-letter code: Ectoine dioxygenase (308 aa).

Q131 contacts L-ectoine. K137 serves as a coordination point for 2-oxoglutarate. H148, D150, and H249 together coordinate Fe cation.

This sequence belongs to the PhyH family. EctD subfamily. Homodimer. Fe(2+) is required as a cofactor.

It catalyses the reaction L-ectoine + 2-oxoglutarate + O2 = 5-hydroxyectoine + succinate + CO2. In terms of biological role, involved in the biosynthesis of 5-hydroxyectoine, called compatible solute, which helps organisms to survive extreme osmotic stress by acting as a highly soluble organic osmolyte. Catalyzes the 2-oxoglutarate-dependent selective hydroxylation of L-ectoine to yield (4S,5S)-5-hydroxyectoine. This chain is Ectoine dioxygenase, found in Bordetella bronchiseptica (strain ATCC BAA-588 / NCTC 13252 / RB50) (Alcaligenes bronchisepticus).